The chain runs to 329 residues: Beta-ketoacyl-[acyl-carrier-protein] synthase III (329 aa).

Catalysis depends on residues Cys-123 and His-256. The segment at 257 to 261 is ACP-binding; sequence QANIR. Asn-286 is a catalytic residue.

It belongs to the thiolase-like superfamily. FabH family. As to quaternary structure, homodimer.

The protein resides in the cytoplasm. It carries out the reaction malonyl-[ACP] + acetyl-CoA + H(+) = 3-oxobutanoyl-[ACP] + CO2 + CoA. The protein operates within lipid metabolism; fatty acid biosynthesis. Functionally, catalyzes the condensation reaction of fatty acid synthesis by the addition to an acyl acceptor of two carbons from malonyl-ACP. Catalyzes the first condensation reaction which initiates fatty acid synthesis and may therefore play a role in governing the total rate of fatty acid production. Possesses both acetoacetyl-ACP synthase and acetyl transacylase activities. Its substrate specificity determines the biosynthesis of branched-chain and/or straight-chain of fatty acids. The protein is Beta-ketoacyl-[acyl-carrier-protein] synthase III of Burkholderia mallei (strain NCTC 10247).